The primary structure comprises 459 residues: NADP-specific glutamate dehydrogenase (459 aa).

Lys-114 is an active-site residue.

This sequence belongs to the Glu/Leu/Phe/Val dehydrogenases family. As to quaternary structure, homohexamer.

The enzyme catalyses L-glutamate + NADP(+) + H2O = 2-oxoglutarate + NH4(+) + NADPH + H(+). In Emericella nidulans (strain FGSC A4 / ATCC 38163 / CBS 112.46 / NRRL 194 / M139) (Aspergillus nidulans), this protein is NADP-specific glutamate dehydrogenase (gdhA).